Reading from the N-terminus, the 225-residue chain is MMYHIPGVLSPKDVARFREQLEQAEWVDGRVTTGAQGAQVKNNQQVDTRSALYAALQNEVLNAVNQHALFFAAALPHTLSTPLFNRYQNNETYGFHVDGAVRSHPQNGWMRTDLSATLFLSDPQSYDGGELVVNDTFGQHRVKLPAGDLVLYPSSSLHCVTPVTRGVRVASFMWIQSMIRDDKKRAMLFDLDNNIQSLKSRYGESEEILSLLNLYHNLLREWSEI.

The 100-residue stretch at 78 to 177 (TLSTPLFNRY…RVASFMWIQS (100 aa)) folds into the Fe2OG dioxygenase domain. His96, Asp98, and His158 together coordinate Fe cation. Arg168 is a binding site for 2-oxoglutarate.

Fe(2+) is required as a cofactor. Requires L-ascorbate as cofactor.

In Escherichia coli O17:K52:H18 (strain UMN026 / ExPEC), this protein is PKHD-type hydroxylase YbiX.